A 436-amino-acid polypeptide reads, in one-letter code: Nucleolar protein 4-like (436 aa).

The interval 1–184 (MSDSTWMSAD…KMNDSEGMDP (184 aa)) is disordered. Low complexity predominate over residues 41 to 61 (SESGSGNGSSTLNPSTSSSTQ). Phosphoserine is present on Ser130. Positions 160 to 169 (ADDDDDDHDD) are enriched in acidic residues. Basic and acidic residues predominate over residues 170-184 (HEDNDKMNDSEGMDP). The residue at position 295 (Ser295) is a Phosphoserine. Positions 351-366 (QPPASLQTGNHSNGPT) are enriched in polar residues. A disordered region spans residues 351 to 400 (QPPASLQTGNHSNGPTDLSMKGGASTTSTTPTPTPSSTSTSRPVPTAQLS). The span at 375-396 (STTSTTPTPTPSSTSTSRPVPT) shows a compositional bias: low complexity.

The polypeptide is Nucleolar protein 4-like (NOL4L) (Pongo abelii (Sumatran orangutan)).